We begin with the raw amino-acid sequence, 555 residues long: MAGLVLSNDTEAKISGDCKRGGCITFPFMIATLLGISVTSYGWVLNLIVFLIEEYNIKSIAAAQISNIVNGCLSMLPVVTAILADSFFGNIPVISASAFISLLGIFLLTLISSFENLRPRPCETGSILCQSPSKLHLGVLYAALALVTAGTSGTRVALASAGANQYDKPRDKGSFFNWYFLTVNTGAIISATAIVYTQENASWRLGFGLCAAANLISFIVFISGKRFYKHDKPMGSPFTSLIRVLVAAILKIKVVTSSKEEDYHREVEKESKTCIGMPSKSFRFLNRAALKSEKDLNQEDGLCHNPWRLCSVEEVEDFKSVLRVLPLWLAILFVGTSIGVQASMTVLQALVTDRGLDSKFKVPAGSLQVIVLISSCVFLVLNNWTIYPIYQKITHKQLTPLQQVGIGQVFNILSMAISAIVEAKRLKTVENEHPMSVLWLLPPLVIVGIGDAFHYMANVAVFYGEFPESMRNTATSVTSVAFGISFYLSTALINLIQRTTAWLPDDINHGRVDNVYWVLVIGGVLNLGYFFVCSWYFTYRKIQDDNRQDPKDVTN.

A run of 12 helical transmembrane segments spans residues 32–52 (TLLG…VFLI), 68–88 (IVNG…DSFF), 91–111 (IPVI…LTLI), 127–147 (ILCQ…LALV), 175–195 (FFNW…TAIV), 205–225 (LGFG…ISGK), 324–344 (VLPL…QASM), 369–389 (VIVL…IYPI), 401–421 (LQQV…SAIV), 437–457 (VLWL…HYMA), 476–496 (SVTS…INLI), and 517–537 (WVLV…SWYF).

It belongs to the major facilitator superfamily. Proton-dependent oligopeptide transporter (POT/PTR) (TC 2.A.17) family. In terms of tissue distribution, expressed in roots.

It localises to the membrane. Functionally, transporter involved in a passive nitrate efflux. This chain is Protein NRT1/ PTR FAMILY 2.1 (NPF2.1), found in Arabidopsis thaliana (Mouse-ear cress).